Consider the following 275-residue polypeptide: 3-methyl-2-oxobutanoate hydroxymethyltransferase (275 aa).

The Mg(2+) site is built by D49 and D88. 3-methyl-2-oxobutanoate is bound by residues 49–50 (DS), D88, and K118. Mg(2+) is bound at residue E120. Catalysis depends on E187, which acts as the Proton acceptor.

The protein belongs to the PanB family. In terms of assembly, homodecamer; pentamer of dimers. Mg(2+) is required as a cofactor.

Its subcellular location is the cytoplasm. The catalysed reaction is 3-methyl-2-oxobutanoate + (6R)-5,10-methylene-5,6,7,8-tetrahydrofolate + H2O = 2-dehydropantoate + (6S)-5,6,7,8-tetrahydrofolate. Its pathway is cofactor biosynthesis; (R)-pantothenate biosynthesis; (R)-pantoate from 3-methyl-2-oxobutanoate: step 1/2. Its function is as follows. Catalyzes the reversible reaction in which hydroxymethyl group from 5,10-methylenetetrahydrofolate is transferred onto alpha-ketoisovalerate to form ketopantoate. This chain is 3-methyl-2-oxobutanoate hydroxymethyltransferase, found in Hyphomonas neptunium (strain ATCC 15444).